Reading from the N-terminus, the 109-residue chain is Large ribosomal subunit protein uL22 (109 aa).

Belongs to the universal ribosomal protein uL22 family. Part of the 50S ribosomal subunit.

In terms of biological role, this protein binds specifically to 23S rRNA; its binding is stimulated by other ribosomal proteins, e.g. L4, L17, and L20. It is important during the early stages of 50S assembly. It makes multiple contacts with different domains of the 23S rRNA in the assembled 50S subunit and ribosome. The globular domain of the protein is located near the polypeptide exit tunnel on the outside of the subunit, while an extended beta-hairpin is found that lines the wall of the exit tunnel in the center of the 70S ribosome. The protein is Large ribosomal subunit protein uL22 of Dehalococcoides mccartyi (strain ATCC BAA-2266 / KCTC 15142 / 195) (Dehalococcoides ethenogenes (strain 195)).